The primary structure comprises 156 residues: Rhombotin-1 (156 aa).

2 LIM zinc-binding domains span residues C24–G83 and C88–L147.

In terms of tissue distribution, expressed mainly in the central nervous. Low level of expression in other tissues including thymus.

The protein resides in the nucleus. In terms of biological role, may be involved in gene regulation within neural lineage cells potentially by direct DNA binding or by binding to other transcription factors. The protein is Rhombotin-1 (LMO1) of Homo sapiens (Human).